The chain runs to 261 residues: UPF0177 protein YvdC (261 aa).

6 helical membrane passes run 15–35 (WVIVIILALLFSALSVSIFHL), 43–63 (VLSIVGLIFAYHKSVWLVLFI), 84–104 (LDTVIFFIIFLLTIISSYLIA), 123–143 (IIIGFALLFLVSILTGIFAQI), 197–217 (YFAFLTALLLFAYMHGPTDLY), and 239–259 (FYLNMSVHLLWNLFGLVIALV).

This sequence belongs to the UPF0177 family.

It is found in the cell membrane. The chain is UPF0177 protein YvdC (yvdC) from Lactococcus lactis subsp. lactis (strain IL1403) (Streptococcus lactis).